The chain runs to 677 residues: Gamma-tubulin complex subunit mod21 (677 aa).

In terms of assembly, component of the gamma-tubulin complex composed of at least alp4, alp6, alp16, ghf1, gtb1 and mod21.

The protein resides in the cytoplasm. Its subcellular location is the cytoskeleton. It is found in the microtubule organizing center. The protein localises to the spindle pole body. Its function is as follows. Component of the gamma-tubulin complex that is required for the regulation of both interphase microtubule organization and nucleation, and mitotic bipolar spindles. Required for correct septation. The protein is Gamma-tubulin complex subunit mod21 of Schizosaccharomyces pombe (strain 972 / ATCC 24843) (Fission yeast).